The chain runs to 313 residues: Methionyl-tRNA formyltransferase (313 aa).

Residue 111–114 (SLLP) coordinates (6S)-5,6,7,8-tetrahydrofolate.

The protein belongs to the Fmt family.

The catalysed reaction is L-methionyl-tRNA(fMet) + (6R)-10-formyltetrahydrofolate = N-formyl-L-methionyl-tRNA(fMet) + (6S)-5,6,7,8-tetrahydrofolate + H(+). Its function is as follows. Attaches a formyl group to the free amino group of methionyl-tRNA(fMet). The formyl group appears to play a dual role in the initiator identity of N-formylmethionyl-tRNA by promoting its recognition by IF2 and preventing the misappropriation of this tRNA by the elongation apparatus. This is Methionyl-tRNA formyltransferase from Mesoplasma florum (strain ATCC 33453 / NBRC 100688 / NCTC 11704 / L1) (Acholeplasma florum).